The chain runs to 279 residues: 5'-nucleotidase SurE (279 aa).

D28, D29, S59, and N113 together coordinate a divalent metal cation.

Belongs to the SurE nucleotidase family. It depends on a divalent metal cation as a cofactor.

It localises to the cytoplasm. The catalysed reaction is a ribonucleoside 5'-phosphate + H2O = a ribonucleoside + phosphate. Functionally, nucleotidase that shows phosphatase activity on nucleoside 5'-monophosphates. The protein is 5'-nucleotidase SurE of Methanospirillum hungatei JF-1 (strain ATCC 27890 / DSM 864 / NBRC 100397 / JF-1).